Here is a 345-residue protein sequence, read N- to C-terminus: Phenylalanine--tRNA ligase alpha subunit (345 aa).

Residue Glu259 coordinates Mg(2+).

It belongs to the class-II aminoacyl-tRNA synthetase family. Phe-tRNA synthetase alpha subunit type 1 subfamily. Tetramer of two alpha and two beta subunits. Requires Mg(2+) as cofactor.

It localises to the cytoplasm. It catalyses the reaction tRNA(Phe) + L-phenylalanine + ATP = L-phenylalanyl-tRNA(Phe) + AMP + diphosphate + H(+). The protein is Phenylalanine--tRNA ligase alpha subunit of Nitrosomonas europaea (strain ATCC 19718 / CIP 103999 / KCTC 2705 / NBRC 14298).